The primary structure comprises 476 residues: ATP synthase subunit beta (476 aa).

154–161 (GGAGVGKT) contributes to the ATP binding site.

This sequence belongs to the ATPase alpha/beta chains family. F-type ATPases have 2 components, CF(1) - the catalytic core - and CF(0) - the membrane proton channel. CF(1) has five subunits: alpha(3), beta(3), gamma(1), delta(1), epsilon(1). CF(0) has three main subunits: a(1), b(2) and c(9-12). The alpha and beta chains form an alternating ring which encloses part of the gamma chain. CF(1) is attached to CF(0) by a central stalk formed by the gamma and epsilon chains, while a peripheral stalk is formed by the delta and b chains.

It is found in the cell inner membrane. The catalysed reaction is ATP + H2O + 4 H(+)(in) = ADP + phosphate + 5 H(+)(out). In terms of biological role, produces ATP from ADP in the presence of a proton gradient across the membrane. The catalytic sites are hosted primarily by the beta subunits. This is ATP synthase subunit beta from Afipia carboxidovorans (strain ATCC 49405 / DSM 1227 / KCTC 32145 / OM5) (Oligotropha carboxidovorans).